A 638-amino-acid chain; its full sequence is 1,4-alpha-glucan branching enzyme GlgB (638 aa).

The active-site Nucleophile is the aspartate 303. Residue glutamate 356 is the Proton donor of the active site.

This sequence belongs to the glycosyl hydrolase 13 family. GlgB subfamily. Monomer.

The catalysed reaction is Transfers a segment of a (1-&gt;4)-alpha-D-glucan chain to a primary hydroxy group in a similar glucan chain.. Its pathway is glycan biosynthesis; glycogen biosynthesis. Its function is as follows. Catalyzes the formation of the alpha-1,6-glucosidic linkages in glycogen by scission of a 1,4-alpha-linked oligosaccharide from growing alpha-1,4-glucan chains and the subsequent attachment of the oligosaccharide to the alpha-1,6 position. The protein is 1,4-alpha-glucan branching enzyme GlgB of Lactobacillus acidophilus (strain ATCC 700396 / NCK56 / N2 / NCFM).